The chain runs to 140 residues: Phosphoribosyl-AMP cyclohydrolase (140 aa).

Asp78 contacts Mg(2+). Cys79 is a Zn(2+) binding site. The Mg(2+) site is built by Asp80 and Asp82. The Zn(2+) site is built by Cys96 and Cys103.

Belongs to the PRA-CH family. Homodimer. It depends on Mg(2+) as a cofactor. Requires Zn(2+) as cofactor.

It localises to the cytoplasm. It carries out the reaction 1-(5-phospho-beta-D-ribosyl)-5'-AMP + H2O = 1-(5-phospho-beta-D-ribosyl)-5-[(5-phospho-beta-D-ribosylamino)methylideneamino]imidazole-4-carboxamide. It participates in amino-acid biosynthesis; L-histidine biosynthesis; L-histidine from 5-phospho-alpha-D-ribose 1-diphosphate: step 3/9. In terms of biological role, catalyzes the hydrolysis of the adenine ring of phosphoribosyl-AMP. This Ralstonia nicotianae (strain ATCC BAA-1114 / GMI1000) (Ralstonia solanacearum) protein is Phosphoribosyl-AMP cyclohydrolase.